A 711-amino-acid polypeptide reads, in one-letter code: Ribosomal RNA large subunit methyltransferase K/L (711 aa).

Residues 42 to 153 (DAQRAVLWSR…KGRATISVDL (112 aa)) enclose the THUMP domain.

The protein belongs to the methyltransferase superfamily. RlmKL family.

The protein resides in the cytoplasm. The enzyme catalyses guanosine(2445) in 23S rRNA + S-adenosyl-L-methionine = N(2)-methylguanosine(2445) in 23S rRNA + S-adenosyl-L-homocysteine + H(+). It catalyses the reaction guanosine(2069) in 23S rRNA + S-adenosyl-L-methionine = N(2)-methylguanosine(2069) in 23S rRNA + S-adenosyl-L-homocysteine + H(+). In terms of biological role, specifically methylates the guanine in position 2445 (m2G2445) and the guanine in position 2069 (m7G2069) of 23S rRNA. This is Ribosomal RNA large subunit methyltransferase K/L from Xanthomonas campestris pv. campestris (strain B100).